Reading from the N-terminus, the 111-residue chain is Nucleoid-associated protein CYB_2894 (111 aa).

This sequence belongs to the YbaB/EbfC family. As to quaternary structure, homodimer.

Its subcellular location is the cytoplasm. The protein localises to the nucleoid. Binds to DNA and alters its conformation. May be involved in regulation of gene expression, nucleoid organization and DNA protection. This chain is Nucleoid-associated protein CYB_2894, found in Synechococcus sp. (strain JA-2-3B'a(2-13)) (Cyanobacteria bacterium Yellowstone B-Prime).